Reading from the N-terminus, the 253-residue chain is UPF0246 protein Swit_4565 (253 aa).

Belongs to the UPF0246 family.

The chain is UPF0246 protein Swit_4565 from Rhizorhabdus wittichii (strain DSM 6014 / CCUG 31198 / JCM 15750 / NBRC 105917 / EY 4224 / RW1) (Sphingomonas wittichii).